We begin with the raw amino-acid sequence, 129 residues long: Small ribosomal subunit protein uS11 (129 aa).

It belongs to the universal ribosomal protein uS11 family. As to quaternary structure, part of the 30S ribosomal subunit. Interacts with proteins S7 and S18. Binds to IF-3.

In terms of biological role, located on the platform of the 30S subunit, it bridges several disparate RNA helices of the 16S rRNA. Forms part of the Shine-Dalgarno cleft in the 70S ribosome. In Psychromonas ingrahamii (strain DSM 17664 / CCUG 51855 / 37), this protein is Small ribosomal subunit protein uS11.